The primary structure comprises 59 residues: Single-pass membrane and coiled-coil domain-containing protein 4 (59 aa).

The tract at residues 1-23 is disordered; the sequence is MRQLKGKPKKETSKDKKERKQAM. Positions 9–22 are enriched in basic and acidic residues; sequence KKETSKDKKERKQA. A coiled-coil region spans residues 9–31; the sequence is KKETSKDKKERKQAMQEARQQIT. Residues 32–52 form a helical membrane-spanning segment; it reads TVVLPTLAVVVLLIVVFVYVA.

It belongs to the SMCO4 family.

The protein resides in the membrane. This Mus musculus (Mouse) protein is Single-pass membrane and coiled-coil domain-containing protein 4 (Smco4).